The primary structure comprises 116 residues: Protein Rev (116 aa).

Serine 5 and serine 8 each carry phosphoserine; by host CK2. The interval 18–26 is homomultimerization; that stretch reads LIKFLYQSN. Residues 23-49 form a disordered region; the sequence is YQSNPPPNPEGTRQARRNRRRRWRERQ. A Nuclear localization signal and RNA-binding (RRE) motif is present at residues 34–50; that stretch reads TRQARRNRRRRWRERQR. Residues 36 to 47 are compositionally biased toward basic residues; that stretch reads QARRNRRRRWRE. Residues 73–84 carry the Nuclear export signal and binding to XPO1 motif; sequence LQLPPLERLTLD. Phosphoserine; by host occurs at positions 92 and 99. The interval 92-116 is disordered; the sequence is SGTQGVGSPQILVESPTVLESGTKE.

The protein belongs to the HIV-1 REV protein family. In terms of assembly, homomultimer; when bound to the RRE. Multimeric assembly is essential for activity and may involve XPO1. Binds to human KPNB1, XPO1, TNPO1, RANBP5 and IPO7. Interacts with the viral Integrase. Interacts with human KHDRBS1. Interacts with human NAP1; this interaction decreases Rev multimerization and stimulates its activity. Interacts with human DEAD-box helicases DDX3 and DDX24; these interactions may serve for viral RNA export to the cytoplasm and packaging, respectively. Interacts with human PSIP1; this interaction may inhibit HIV-1 DNA integration by promoting dissociation of the Integrase-LEDGF/p75 complex. In terms of processing, asymmetrically arginine dimethylated at one site by host PRMT6. Methylation impairs the RNA-binding activity and export of viral RNA from the nucleus to the cytoplasm. Phosphorylated by protein kinase CK2. Presence of, and maybe binding to the N-terminus of the regulatory beta subunit of CK2 is necessary for CK2-mediated Rev's phosphorylation.

Its subcellular location is the host nucleus. It is found in the host nucleolus. It localises to the host cytoplasm. In terms of biological role, escorts unspliced or incompletely spliced viral pre-mRNAs (late transcripts) out of the nucleus of infected cells. These pre-mRNAs carry a recognition sequence called Rev responsive element (RRE) located in the env gene, that is not present in fully spliced viral mRNAs (early transcripts). This function is essential since most viral proteins are translated from unspliced or partially spliced pre-mRNAs which cannot exit the nucleus by the pathway used by fully processed cellular mRNAs. Rev itself is translated from a fully spliced mRNA that readily exits the nucleus. Rev's nuclear localization signal (NLS) binds directly to KPNB1/Importin beta-1 without previous binding to KPNA1/Importin alpha-1. KPNB1 binds to the GDP bound form of RAN (Ran-GDP) and targets Rev to the nucleus. In the nucleus, the conversion from Ran-GDP to Ran-GTP dissociates Rev from KPNB1 and allows Rev's binding to the RRE in viral pre-mRNAs. Rev multimerization on the RRE via cooperative assembly exposes its nuclear export signal (NES) to the surface. Rev can then form a complex with XPO1/CRM1 and Ran-GTP, leading to nuclear export of the complex. Conversion from Ran-GTP to Ran-GDP mediates dissociation of the Rev/RRE/XPO1/RAN complex, so that Rev can return to the nucleus for a subsequent round of export. Beside KPNB1, also seems to interact with TNPO1/Transportin-1, RANBP5/IPO5 and IPO7/RANBP7 for nuclear import. The nucleoporin-like HRB/RIP is an essential cofactor that probably indirectly interacts with Rev to release HIV RNAs from the perinuclear region to the cytoplasm. This is Protein Rev from Human immunodeficiency virus type 1 group M subtype B (isolate BRU/LAI) (HIV-1).